The chain runs to 309 residues: tRNA pseudouridine synthase B (309 aa).

Aspartate 39 (nucleophile) is an active-site residue. The region spanning 229 to 306 is the PUA domain; sequence LPRVVVHQES…ERVLTLRKVF (78 aa).

The protein belongs to the pseudouridine synthase TruB family. Type 1 subfamily.

The catalysed reaction is uridine(55) in tRNA = pseudouridine(55) in tRNA. Functionally, responsible for synthesis of pseudouridine from uracil-55 in the psi GC loop of transfer RNAs. The chain is tRNA pseudouridine synthase B from Thermotoga maritima (strain ATCC 43589 / DSM 3109 / JCM 10099 / NBRC 100826 / MSB8).